Consider the following 127-residue polypeptide: Fluoride-specific ion channel FluC (127 aa).

4 helical membrane-spanning segments follow: residues 7–27 (LFLISCGASLGAMSRHGLTLL), 37–57 (FGTLIANYIGCLIMGIMLAMF), 70–90 (FFVTGFLGSLTTFSAFSAEVI), and 102–122 (ITITSLHILGCLFFTTLGVFI). Na(+) is bound by residues Gly77 and Thr80.

Belongs to the fluoride channel Fluc/FEX (TC 1.A.43) family.

It localises to the cell inner membrane. The catalysed reaction is fluoride(in) = fluoride(out). With respect to regulation, na(+) is not transported, but it plays an essential structural role and its presence is essential for fluoride channel function. Functionally, fluoride-specific ion channel. Important for reducing fluoride concentration in the cell, thus reducing its toxicity. The protein is Fluoride-specific ion channel FluC of Histophilus somni (strain 129Pt) (Haemophilus somnus).